Reading from the N-terminus, the 492-residue chain is Solute carrier family 2, facilitated glucose transporter member 1 (492 aa).

M1 carries the post-translational modification N-acetylmethionine. The Cytoplasmic portion of the chain corresponds to 1-11; that stretch reads MEPSSKKLTGR. A helical membrane pass occupies residues 12–33; sequence LMLAVGGAVLGSLQFGYNTGVI. Residues 34-66 are Extracellular-facing; it reads NAPQKVIEEFYNQTWVHRYGESILPTTLTTLWS. N45 carries N-linked (GlcNAc...) asparagine glycosylation. The helical transmembrane segment at 67-87 threads the bilayer; the sequence is LSVAIFSVGGMIGSFSVGLFV. Residues 88–90 are Cytoplasmic-facing; the sequence is NRF. A helical transmembrane segment spans residues 91–112; that stretch reads GRRNSMLMMNLLAFVSAVLMGF. Residues 113 to 120 lie on the Extracellular side of the membrane; it reads SKLGKSFE. A helical transmembrane segment spans residues 121-144; the sequence is MLILGRFIIGVYCGLTTGFVPMYV. T137 serves as a coordination point for cytochalasin B. Topologically, residues 145 to 155 are cytoplasmic; the sequence is GEVSPTALRGA. The chain crosses the membrane as a helical span at residues 156 to 176; that stretch reads LGTLHQLGIVVGILIAQVFGL. Residues 177–185 are Extracellular-facing; it reads DSIMGNKDL. Residues 186-206 form a helical membrane-spanning segment; the sequence is WPLLLSIIFIPALLQCIVLPF. Over 207–271 the chain is Cytoplasmic; it reads CPESPRFLLI…LFRSPAYRQP (65 aa). S226 bears the Phosphoserine; by PKC/PRKCB mark. Residues 272–293 traverse the membrane as a helical segment; the sequence is ILIAVVLQLSQQLSGINAVFYY. Q282 contacts cytochalasin B. D-glucose-binding positions include 282–283 and N288; that span reads QQ. Topologically, residues 294-306 are extracellular; sequence STSIFEKAGVQQP. A helical transmembrane segment spans residues 307–328; the sequence is VYATIGSGIVNTAFTVVSLFVV. Residue N317 participates in D-glucose binding. Over 329–334 the chain is Cytoplasmic; it reads ERAGRR. The chain crosses the membrane as a helical span at residues 335–355; sequence TLHLIGLAGMAGCAILMTIAL. The Extracellular portion of the chain corresponds to 356–365; it reads ALLEQLPWMS. A helical membrane pass occupies residues 366 to 388; it reads YLSIVAIFGFVAFFEVGPGPIPW. E380 lines the D-glucose pocket. W388 contributes to the cytochalasin B binding site. The Cytoplasmic segment spans residues 389-401; it reads FIVAELFSQGPRP. The chain crosses the membrane as a helical span at residues 402–422; that stretch reads AAIAVAGFSNWTSNFIVGMCF. Residue N411 participates in cytochalasin B binding. Residues 423–429 lie on the Extracellular side of the membrane; it reads QYVEQLC. A helical membrane pass occupies residues 430–450; that stretch reads GPYVFIIFTVLLVLFFIFTYF. Over 451–492 the chain is Cytoplasmic; it reads KVPETKGRTFDEIASGFRQGGASQSDKTPEELFHPLGADSQV. Phosphoserine is present on S465. Residues 468–492 form a disordered region; the sequence is RQGGASQSDKTPEELFHPLGADSQV. T478 is subject to Phosphothreonine. Residue S490 is modified to Phosphoserine.

The protein belongs to the major facilitator superfamily. Sugar transporter (TC 2.A.1.1) family. Glucose transporter subfamily. In terms of assembly, interacts with GIPC (via PDZ domain). Found in a complex with ADD2, DMTN and SLC2A1. Interacts (via C-terminus cytoplasmic region) with DMTN isoform 2. Interacts with SNX27; the interaction is required when endocytosed to prevent degradation in lysosomes and promote recycling to the plasma membrane. Interacts with STOM. Interacts with SGTA (via Gln-rich region). Interacts with isoform 1 of BSG. Phosphorylation at Ser-226 by PKC promotes glucose uptake by increasing cell membrane localization. In terms of tissue distribution, detected in erythrocytes (at protein level). Expressed at variable levels in many human tissues.

It is found in the cell membrane. The protein resides in the melanosome. It localises to the photoreceptor inner segment. It catalyses the reaction D-glucose(out) = D-glucose(in). It functions in the pathway carbohydrate degradation. With respect to regulation, the uptake of glucose is inhibited by cytochalasin B and Phe-amide core-scaffold inhibitors GLUT-i1 and GLUT-i2. These inhibitors bind in the central cavity of the inward-open state and overlap the glucose-binding site. Glucose uptake is increased in response to phorbol ester 12-O-tetradecanoylphorbol-13-acetate (TPA) treatment: TPA-induced glucose uptake requires phosphorylation at Ser-226. Interacts with SMIM43; the interaction may promote SLC2A1-mediated glucose transport to meet the energy needs of mesendoderm differentiation. Its function is as follows. Facilitative glucose transporter, which is responsible for constitutive or basal glucose uptake. Has a very broad substrate specificity; can transport a wide range of aldoses including both pentoses and hexoses. Most important energy carrier of the brain: present at the blood-brain barrier and assures the energy-independent, facilitative transport of glucose into the brain. In association with BSG and NXNL1, promotes retinal cone survival by increasing glucose uptake into photoreceptors. Required for mesendoderm differentiation. The sequence is that of Solute carrier family 2, facilitated glucose transporter member 1 from Homo sapiens (Human).